Reading from the N-terminus, the 364-residue chain is Peptide chain release factor 2 (364 aa).

Q251 is modified (N5-methylglutamine).

Belongs to the prokaryotic/mitochondrial release factor family. Post-translationally, methylated by PrmC. Methylation increases the termination efficiency of RF2.

The protein localises to the cytoplasm. Its function is as follows. Peptide chain release factor 2 directs the termination of translation in response to the peptide chain termination codons UGA and UAA. The protein is Peptide chain release factor 2 of Sulfurovum sp. (strain NBC37-1).